The following is a 531-amino-acid chain: Polypyrimidine tract-binding protein 2 (531 aa).

At Met-1 the chain carries N-acetylmethionine. Ser-26 and Ser-27 each carry phosphoserine. 2 consecutive RRM domains span residues 59–133 (RVLH…YSNH) and 181–257 (LRII…FSKL). The residue at position 308 (Ser-308) is a Phosphoserine. 2 consecutive RRM domains span residues 338–412 (TVLL…LSKH) and 455–529 (ATLH…FSKS).

In terms of assembly, monomer. Interacts with NOVA1; the interaction is direct. Identified in a mRNP complex, at least composed of DHX9, DDX3X, ELAVL1, HNRNPU, IGF2BP1, ILF3, PABPC1, PCBP2, PTBP2, STAU1, STAU2, SYNCRIP and YBX1. Part of a ternary complex containing KHSRP and HNRPH1. Interacts with NOVA2; the interaction is direct.

Its subcellular location is the nucleus. In terms of biological role, RNA-binding protein which binds to intronic polypyrimidine tracts and mediates negative regulation of exons splicing. May antagonize in a tissue-specific manner the ability of NOVA1 to activate exon selection. In addition to its function in pre-mRNA splicing, plays also a role in the regulation of translation. The protein is Polypyrimidine tract-binding protein 2 of Rattus norvegicus (Rat).